We begin with the raw amino-acid sequence, 342 residues long: Methionine import ATP-binding protein MetN (342 aa).

An ABC transporter domain is found at 2-241 (ITLEQVTKIY…PQQPITKRFV (240 aa)). 38 to 45 (GYSGAGKS) is an ATP binding site.

This sequence belongs to the ABC transporter superfamily. Methionine importer (TC 3.A.1.24) family. As to quaternary structure, the complex is composed of two ATP-binding proteins (MetN), two transmembrane proteins (MetI) and a solute-binding protein (MetQ).

It is found in the cell membrane. The catalysed reaction is L-methionine(out) + ATP + H2O = L-methionine(in) + ADP + phosphate + H(+). It carries out the reaction D-methionine(out) + ATP + H2O = D-methionine(in) + ADP + phosphate + H(+). Part of the ABC transporter complex MetNIQ involved in methionine import. Responsible for energy coupling to the transport system. The polypeptide is Methionine import ATP-binding protein MetN (Geobacillus kaustophilus (strain HTA426)).